A 236-amino-acid chain; its full sequence is Small ribosomal subunit protein uS2c (236 aa).

Belongs to the universal ribosomal protein uS2 family.

The protein localises to the plastid. Its subcellular location is the chloroplast. This is Small ribosomal subunit protein uS2c (rps2) from Zea mays (Maize).